Here is a 244-residue protein sequence, read N- to C-terminus: Nodulation protein G (244 aa).

11-35 serves as a coordination point for NAD(+); it reads VTGASGAIGGAIARVLHAQGAIVGL. Ser-139 lines the substrate pocket. Tyr-152 (proton acceptor) is an active-site residue.

This sequence belongs to the short-chain dehydrogenases/reductases (SDR) family.

Its function is as follows. Proposed to modify Nod factor fatty acyl chain. This Rhizobium meliloti (Ensifer meliloti) protein is Nodulation protein G (nodG).